Reading from the N-terminus, the 222-residue chain is Glutathione S-transferase A1 (222 aa).

Met1 carries the N-acetylmethionine modification. N-acetylalanine; in Glutathione S-transferase A1, N-terminally processed is present on Ala2. Positions 3-83 (GKPTLHYFNG…YIATKYNLYG (81 aa)) constitute a GST N-terminal domain. Lys4 carries the post-translational modification N6-succinyllysine. Glutathione contacts are provided by residues Tyr9, Lys45, 54 to 55 (QV), and 67 to 68 (QT). The 124-residue stretch at 85 to 208 (DMKERALIDM…QPGSQRKPPT (124 aa)) folds into the GST C-terminal domain.

It belongs to the GST superfamily. Alpha family. In terms of assembly, homodimer or heterodimer of GSTA1 and GSTA2. Expressed in corpus luteum, adrenal gland, testis, liver, lung, thyroid and kidney.

Its subcellular location is the cytoplasm. The catalysed reaction is RX + glutathione = an S-substituted glutathione + a halide anion + H(+). The enzyme catalyses prostaglandin A2 + glutathione = prostaglandin A2-S-(R)-glutathione. It carries out the reaction prostaglandin J2 + glutathione = prostaglandin J2-S-(R)-glutathione. It catalyses the reaction (13S)-hydroperoxy-(9Z,11E)-octadecadienoate + 2 glutathione = (13S)-hydroxy-(9Z,11E)-octadecadienoate + glutathione disulfide + H2O. The catalysed reaction is androst-5-ene-3,17-dione = androst-4-ene-3,17-dione. Its function is as follows. Glutathione S-transferase that catalyzes the nucleophilic attack of the sulfur atom of glutathione on the electrophilic groups of a wide range of exogenous and endogenous compounds. Involved in the formation of glutathione conjugates of both prostaglandin A2 (PGA2) and prostaglandin J2 (PGJ2). It also catalyzes the isomerization of D5-androstene-3,17-dione (AD) into D4-androstene-3,17-dione and may therefore play an important role in hormone biosynthesis. Through its glutathione-dependent peroxidase activity toward the fatty acid hydroperoxide (13S)-hydroperoxy-(9Z,11E)-octadecadienoate/13-HPODE it is also involved in the metabolism of oxidized linoleic acid. The chain is Glutathione S-transferase A1 (GSTA1) from Bos taurus (Bovine).